Here is a 198-residue protein sequence, read N- to C-terminus: Remorin (198 aa).

A compositionally biased stretch (basic and acidic residues) spans M1–I11. Positions M1 to A24 are disordered. Residues E97–Y184 adopt a coiled-coil conformation.

This sequence belongs to the remorin family. In terms of processing, the N-terminus is blocked. Phosphorylated.

The protein resides in the cell membrane. Functionally, binds to both simple and complex galacturonides. May be involved in cell-to-cell signaling and molecular transport. The chain is Remorin from Solanum tuberosum (Potato).